The chain runs to 188 residues: Chitin synthase 2 (188 aa).

This sequence belongs to the chitin synthase family.

The protein localises to the cell membrane. It carries out the reaction [(1-&gt;4)-N-acetyl-beta-D-glucosaminyl](n) + UDP-N-acetyl-alpha-D-glucosamine = [(1-&gt;4)-N-acetyl-beta-D-glucosaminyl](n+1) + UDP + H(+). Polymerizes chitin, a structural polymer of the cell wall and septum, by transferring the sugar moiety of UDP-GlcNAc to the non-reducing end of the growing chitin polymer. The polypeptide is Chitin synthase 2 (CHS2) (Exophiala jeanselmei (Dematiaceous fungus)).